Consider the following 301-residue polypeptide: uncharacterized protein (301 aa).

The next 9 membrane-spanning stretches (helical) occupy residues Met-1–Ile-21, Ser-33–Tyr-53, Ala-72–Trp-92, Phe-101–Ile-121, Phe-124–Tyr-144, Val-194–Ile-214, Ile-220–Ala-240, Leu-253–Pro-273, and Glu-274–Ile-294.

This sequence belongs to the TerC family.

It localises to the cell membrane. This is an uncharacterized protein from Rickettsia conorii (strain ATCC VR-613 / Malish 7).